Consider the following 727-residue polypeptide: NADH-ubiquinone oxidoreductase 75 kDa subunit, mitochondrial (727 aa).

The N-terminal 23 residues, 1 to 23 (MLRIPVRKALVVLSKSPKGCVRT), are a transit peptide targeting the mitochondrion. The 2Fe-2S ferredoxin-type domain maps to 30–108 (NLIEVFVDGQ…GWNILTNSKK (79 aa)). Residues C64, C75, and C78 each coordinate [2Fe-2S] cluster. K84 is subject to N6-acetyllysine. Residue C92 coordinates [2Fe-2S] cluster. The 40-residue stretch at 108–147 (KSKKAREGVMEFLLANHPLDCPICDQGGECDLQDQSMMFG) folds into the 4Fe-4S His(Cys)3-ligated-type domain. Residues H124, C128, C131, C137, C176, C179, C182, and C226 each coordinate [4Fe-4S] cluster. The 57-residue stretch at 245–301 (TRKTESIDVMDAVGSNIVVSTRTGEVMRILPRMHEDINEEWISDKTRFAYDGLKRQR) folds into the 4Fe-4S Mo/W bis-MGD-type domain. An N6-acetyllysine mark is found at K467, K499, and K709.

Belongs to the complex I 75 kDa subunit family. Core subunit of respiratory chain NADH dehydrogenase (Complex I) which is composed of 45 different subunits. This is the largest subunit of complex I and it is a component of the iron-sulfur (IP) fragment of the enzyme. Complex I associates with ubiquinol-cytochrome reductase complex (Complex III) to form supercomplexes. Interacts with MDM2 and AKAP1. [2Fe-2S] cluster is required as a cofactor. It depends on [4Fe-4S] cluster as a cofactor.

Its subcellular location is the mitochondrion inner membrane. The catalysed reaction is a ubiquinone + NADH + 5 H(+)(in) = a ubiquinol + NAD(+) + 4 H(+)(out). Core subunit of the mitochondrial membrane respiratory chain NADH dehydrogenase (Complex I) which catalyzes electron transfer from NADH through the respiratory chain, using ubiquinone as an electron acceptor. Essential for catalysing the entry and efficient transfer of electrons within complex I. Plays a key role in the assembly and stability of complex I and participates in the association of complex I with ubiquinol-cytochrome reductase complex (Complex III) to form supercomplexes. The chain is NADH-ubiquinone oxidoreductase 75 kDa subunit, mitochondrial (NDUFS1) from Pan troglodytes (Chimpanzee).